The following is a 209-amino-acid chain: Uracil phosphoribosyltransferase (209 aa).

5-phospho-alpha-D-ribose 1-diphosphate-binding positions include arginine 79, arginine 104, and 131-139; that span reads DPMLATGGS. Uracil is bound by residues isoleucine 194 and 199–201; that span reads GDA. A 5-phospho-alpha-D-ribose 1-diphosphate-binding site is contributed by aspartate 200.

This sequence belongs to the UPRTase family. Mg(2+) serves as cofactor.

The enzyme catalyses UMP + diphosphate = 5-phospho-alpha-D-ribose 1-diphosphate + uracil. It functions in the pathway pyrimidine metabolism; UMP biosynthesis via salvage pathway; UMP from uracil: step 1/1. Allosterically activated by GTP. Catalyzes the conversion of uracil and 5-phospho-alpha-D-ribose 1-diphosphate (PRPP) to UMP and diphosphate. The sequence is that of Uracil phosphoribosyltransferase from Chromohalobacter salexigens (strain ATCC BAA-138 / DSM 3043 / CIP 106854 / NCIMB 13768 / 1H11).